Reading from the N-terminus, the 193-residue chain is Putative manganese efflux pump MntP (193 aa).

6 helical membrane passes run L6 to I26, Y41 to I61, T65 to I85, L107 to M127, I132 to L152, and V169 to F189.

This sequence belongs to the MntP (TC 9.B.29) family.

The protein localises to the cell inner membrane. In terms of biological role, probably functions as a manganese efflux pump. This is Putative manganese efflux pump MntP from Desulfotalea psychrophila (strain LSv54 / DSM 12343).